The sequence spans 389 residues: Chalcone synthase 6 (389 aa).

Cysteine 164 is an active-site residue.

It belongs to the thiolase-like superfamily. Chalcone/stilbene synthases family.

The enzyme catalyses (E)-4-coumaroyl-CoA + 3 malonyl-CoA + 3 H(+) = 2',4,4',6'-tetrahydroxychalcone + 3 CO2 + 4 CoA. The protein operates within secondary metabolite biosynthesis; flavonoid biosynthesis. Its function is as follows. The primary product of this enzyme is 4,2',4',6'-tetrahydroxychalcone (also termed naringenin-chalcone or chalcone) which can under specific conditions spontaneously isomerize into naringenin. This is Chalcone synthase 6 (CHS6) from Trifolium subterraneum (Subterranean clover).